The following is a 647-amino-acid chain: Carotenoid phi-ring synthase (647 aa).

Residues A67, 86–87, K94, and Y120 contribute to the FAD site; that span reads EA. Positions 322–416 constitute a Rieske domain; sequence VASIPKREVP…VREAGEMLVI (95 aa). C362, H364, C380, and H383 together coordinate [2Fe-2S] cluster. The FAD site is built by D601 and M612.

Belongs to the carotenoid/retinoid oxidoreductase family. FAD serves as cofactor. The cofactor is [2Fe-2S] cluster.

The catalysed reaction is a carotenoid beta-end derivative + 2 A = a carotenoid phi-end derivative + 2 AH2. Its pathway is carotenoid biosynthesis. Involved in the biosynthesis of chlorobactene, a carotenoid with aromatic end group. Catalyzes the introduction of two additional double bonds into the ionone ring of gamma-carotene to produce chlorobactene. The reaction includes an intramolecular methyl transfer from position C1 to position C2 of the ring. The chain is Carotenoid phi-ring synthase from Chlorobaculum tepidum (strain ATCC 49652 / DSM 12025 / NBRC 103806 / TLS) (Chlorobium tepidum).